The following is a 367-amino-acid chain: DNA polymerase IV (367 aa).

Residues 14–198 (IIHIDMDAFF…LPIEKFHGVG (185 aa)) form the UmuC domain. 2 residues coordinate Mg(2+): aspartate 18 and aspartate 116. The active site involves glutamate 117.

The protein belongs to the DNA polymerase type-Y family. In terms of assembly, monomer. Requires Mg(2+) as cofactor.

It localises to the cytoplasm. The catalysed reaction is DNA(n) + a 2'-deoxyribonucleoside 5'-triphosphate = DNA(n+1) + diphosphate. Functionally, poorly processive, error-prone DNA polymerase involved in untargeted mutagenesis. Copies undamaged DNA at stalled replication forks, which arise in vivo from mismatched or misaligned primer ends. These misaligned primers can be extended by PolIV. Exhibits no 3'-5' exonuclease (proofreading) activity. May be involved in translesional synthesis, in conjunction with the beta clamp from PolIII. The polypeptide is DNA polymerase IV (Streptococcus thermophilus (strain CNRZ 1066)).